A 161-amino-acid chain; its full sequence is Immunity protein YezG (161 aa).

Monomer. Interacts with the C-terminus of cognate toxin YeeF, probably with 2:2 stoichiometry. The second YezG molecules binds with lower affinity.

It is found in the cytoplasm. In terms of biological role, immunity component of an LXG toxin-immunity module. These modules promote kin selection, mediate competition in biofilms, and drive spatial segregation of different strains, indicating that LXG toxins may help avoid warfare between strains in biofilms. Neutralizes the toxic abilities of cognate toxin YeeF upon expression in E.coli and in vitro. The sequence is that of Immunity protein YezG from Bacillus spizizenii (strain ATCC 23059 / NRRL B-14472 / W23) (Bacillus subtilis subsp. spizizenii).